The primary structure comprises 1176 residues: Translation initiation factor IF-2 (1176 aa).

Low complexity-rich tracts occupy residues I32–S44, A57–S79, A94–S166, and K193–T235. 2 disordered regions span residues I32–K502 and R535–R567. Over residues A251 to A270 the composition is skewed to pro residues. 2 stretches are compositionally biased toward low complexity: residues G388–R409 and N439–G469. Over residues G478–R492 the composition is skewed to basic and acidic residues. A compositionally biased stretch (basic residues) spans V553 to R567. The tr-type G domain maps to R668 to L840. The G1 stretch occupies residues G677–T684. G677 to T684 contributes to the GTP binding site. The segment at G702 to H706 is G2. The segment at D727–G730 is G3. Residues D727–H731 and N781–D784 contribute to the GTP site. Residues N781–D784 are G4. The G5 stretch occupies residues S817–I819.

It belongs to the TRAFAC class translation factor GTPase superfamily. Classic translation factor GTPase family. IF-2 subfamily.

The protein resides in the cytoplasm. In terms of biological role, one of the essential components for the initiation of protein synthesis. Protects formylmethionyl-tRNA from spontaneous hydrolysis and promotes its binding to the 30S ribosomal subunits. Also involved in the hydrolysis of GTP during the formation of the 70S ribosomal complex. This is Translation initiation factor IF-2 from Synechococcus sp. (strain CC9902).